The primary structure comprises 583 residues: Radixin (583 aa).

Positions 5–295 (INVRVTTMDA…GNHELYMRRR (291 aa)) constitute an FERM domain. Position 60 to 63 (60 to 63 (KLNK)) interacts with a 1,2-diacyl-sn-glycero-3-phospho-(1D-myo-inositol). Position 83 is an N6-succinyllysine (lysine 83). Residue lysine 278 participates in a 1,2-diacyl-sn-glycero-3-phospho-(1D-myo-inositol) binding. Disordered regions lie at residues 310–330 (REEKHQKQLERAQLENEKKKR), 376–407 (DQERKRAKEEAERLEKERRAAEEAKSAIAKQA), and 462–526 (ELKT…RVKK). The span at 376–400 (DQERKRAKEEAERLEKERRAAEEAK) shows a compositional bias: basic and acidic residues. Residues 469–480 (APPPPPPPPVIP) are compositionally biased toward pro residues. Composition is skewed to basic and acidic residues over residues 483–492 (ENEHDEHDEN) and 506–525 (MNHRSEEERVTETQKNERVK). Threonine 564 is subject to Phosphothreonine; by ROCK2.

As to quaternary structure, binds NHERF1. Interacts with NHERF1, NHERF2, LAYN, MME/NEP and ICAM2. Interacts with CPNE1 (via VWFA domain) and CPNE4 (via VWFA domain). Interacts (via FERM domain) with SPN/CD43 cytoplasmic tail. Interacts with CD44. Interacts with CLIC5; may work together in a complex which also includes EZR and MYO6 to stabilize linkages between the plasma membrane and subjacent actin cytoskeleton at the base of stereocilia. In terms of processing, phosphorylated by tyrosine-protein kinases. Phosphorylation by ROCK2 suppresses the head-to-tail association of the N-terminal and C-terminal halves resulting in an opened conformation which is capable of actin and membrane-binding.

It is found in the cell membrane. The protein localises to the cytoplasm. Its subcellular location is the cytoskeleton. It localises to the cleavage furrow. The protein resides in the cell projection. It is found in the microvillus. The protein localises to the stereocilium. With respect to regulation, a head-to-tail association, of the N-terminal and C-terminal halves results in a closed conformation (inactive form) which is incapable of actin or membrane-binding. Probably plays a crucial role in the binding of the barbed end of actin filaments to the plasma membrane. This chain is Radixin (RDX), found in Homo sapiens (Human).